The primary structure comprises 280 residues: Meiotic spindle formation protein 2 (280 aa).

A disordered region spans residues 1–104 (MSGLDDRKKL…LPKSSPESSV (104 aa)). The segment covering 72–92 (LHSESKKELSRNPVSRGEEHS) has biased composition (basic and acidic residues). The span at 93 to 104 (SSLPKSSPESSV) shows a compositional bias: low complexity.

In terms of assembly, interacts with mei-1.

The protein resides in the cytoplasm. It localises to the cytoskeleton. Its subcellular location is the spindle pole. In terms of biological role, forms a heterodimeric complex in conjunction with mei-1 which severs microtubules in vitro in an ATP-dependent manner. This activity may promote rapid reorganization of cellular microtubule arrays. May act to target mei-1 within the cell. Required specifically for meiotic spindle formation in the female germline. This chain is Meiotic spindle formation protein 2 (mei-2), found in Caenorhabditis elegans.